The sequence spans 196 residues: Dephospho-CoA kinase (196 aa).

In terms of domain architecture, DPCK spans 5-196; it reads IIGLTGGIAT…QVDIALNFEL (192 aa). 13–18 is a binding site for ATP; sequence ATGKTT.

Belongs to the CoaE family.

Its subcellular location is the cytoplasm. The enzyme catalyses 3'-dephospho-CoA + ATP = ADP + CoA + H(+). The protein operates within cofactor biosynthesis; coenzyme A biosynthesis; CoA from (R)-pantothenate: step 5/5. In terms of biological role, catalyzes the phosphorylation of the 3'-hydroxyl group of dephosphocoenzyme A to form coenzyme A. This Trichormus variabilis (strain ATCC 29413 / PCC 7937) (Anabaena variabilis) protein is Dephospho-CoA kinase.